A 299-amino-acid polypeptide reads, in one-letter code: Rhodanese-like/PpiC domain-containing protein 12, chloroplastic (299 aa).

A chloroplast-targeting transit peptide spans 1-81; that stretch reads MFRVTGTLSA…SGFPALKMRA (81 aa). At Ser82 the chain carries N-acetylserine. The PpiC domain maps to 93 to 183; it reads SREILVQHLL…FGLHLLQVLS (91 aa). The Rhodanese domain occupies 205-297; that stretch reads FMDEAQLIDV…YSLKVDPSIP (93 aa). The active-site Cysteine persulfide intermediate is Cys257.

The protein resides in the plastid. It localises to the chloroplast. This is Rhodanese-like/PpiC domain-containing protein 12, chloroplastic from Arabidopsis thaliana (Mouse-ear cress).